We begin with the raw amino-acid sequence, 66 residues long: Large ribosomal subunit protein uL29 (66 aa).

Belongs to the universal ribosomal protein uL29 family.

The protein is Large ribosomal subunit protein uL29 of Ruegeria pomeroyi (strain ATCC 700808 / DSM 15171 / DSS-3) (Silicibacter pomeroyi).